Reading from the N-terminus, the 291-residue chain is Ribonuclease Z (291 aa).

The Zn(2+) site is built by histidine 61, histidine 63, aspartate 65, histidine 66, histidine 133, aspartate 201, and histidine 257. Residue aspartate 65 is the Proton acceptor of the active site.

It belongs to the RNase Z family. As to quaternary structure, homodimer. It depends on Zn(2+) as a cofactor.

The catalysed reaction is Endonucleolytic cleavage of RNA, removing extra 3' nucleotides from tRNA precursor, generating 3' termini of tRNAs. A 3'-hydroxy group is left at the tRNA terminus and a 5'-phosphoryl group is left at the trailer molecule.. Functionally, zinc phosphodiesterase, which displays some tRNA 3'-processing endonuclease activity. Probably involved in tRNA maturation, by removing a 3'-trailer from precursor tRNA. The protein is Ribonuclease Z of Saccharolobus solfataricus (strain ATCC 35092 / DSM 1617 / JCM 11322 / P2) (Sulfolobus solfataricus).